Reading from the N-terminus, the 63-residue chain is 2-hydroxymuconate tautomerase (63 aa).

Residue Pro-2 is the Proton acceptor; via imino nitrogen of the active site.

Belongs to the 4-oxalocrotonate tautomerase family. As to quaternary structure, homohexamer.

It catalyses the reaction (2Z,4E)-2-hydroxyhexa-2,4-dienedioate = (3E)-2-oxohex-3-enedioate. The protein operates within xenobiotic degradation; toluene degradation. Catalyzes the ketonization of 2-hydroxymuconate stereoselectively to yield 2-oxo-3-hexenedioate. The chain is 2-hydroxymuconate tautomerase (dmpI) from Pseudomonas sp. (strain CF600).